The chain runs to 154 residues: Probable chemoreceptor glutamine deamidase CheD (154 aa).

This sequence belongs to the CheD family.

The catalysed reaction is L-glutaminyl-[protein] + H2O = L-glutamyl-[protein] + NH4(+). Probably deamidates glutamine residues to glutamate on methyl-accepting chemotaxis receptors (MCPs), playing an important role in chemotaxis. This chain is Probable chemoreceptor glutamine deamidase CheD, found in Methanococcus maripaludis (strain C5 / ATCC BAA-1333).